The chain runs to 227 residues: UPF0758 protein Psyc_1834 (227 aa).

The region spanning 102 to 224 (GLGRSQMVKD…TLSYAENCLA (123 aa)) is the MPN domain. Residues His173, His175, and Asp186 each coordinate Zn(2+). The JAMM motif motif lies at 173-186 (HNHPHTDATPSTAD).

Belongs to the UPF0758 family.

The polypeptide is UPF0758 protein Psyc_1834 (Psychrobacter arcticus (strain DSM 17307 / VKM B-2377 / 273-4)).